Here is a 382-residue protein sequence, read N- to C-terminus: Dual-specificity RNA methyltransferase RlmN (382 aa).

Glutamate 96 (proton acceptor) is an active-site residue. In terms of domain architecture, Radical SAM core spans 102–342 (QGKRGTLCVS…VRTTRGEDID (241 aa)). Cysteine 109 and cysteine 345 are joined by a disulfide. Residues cysteine 116, cysteine 120, and cysteine 123 each contribute to the [4Fe-4S] cluster site. S-adenosyl-L-methionine-binding positions include 170–171 (GE), serine 202, 224–226 (SLH), and asparagine 302. The active-site S-methylcysteine intermediate is the cysteine 345.

Belongs to the radical SAM superfamily. RlmN family. [4Fe-4S] cluster is required as a cofactor.

Its subcellular location is the cytoplasm. The catalysed reaction is adenosine(2503) in 23S rRNA + 2 reduced [2Fe-2S]-[ferredoxin] + 2 S-adenosyl-L-methionine = 2-methyladenosine(2503) in 23S rRNA + 5'-deoxyadenosine + L-methionine + 2 oxidized [2Fe-2S]-[ferredoxin] + S-adenosyl-L-homocysteine. The enzyme catalyses adenosine(37) in tRNA + 2 reduced [2Fe-2S]-[ferredoxin] + 2 S-adenosyl-L-methionine = 2-methyladenosine(37) in tRNA + 5'-deoxyadenosine + L-methionine + 2 oxidized [2Fe-2S]-[ferredoxin] + S-adenosyl-L-homocysteine. Its function is as follows. Specifically methylates position 2 of adenine 2503 in 23S rRNA and position 2 of adenine 37 in tRNAs. m2A2503 modification seems to play a crucial role in the proofreading step occurring at the peptidyl transferase center and thus would serve to optimize ribosomal fidelity. The polypeptide is Dual-specificity RNA methyltransferase RlmN (Pseudomonas fluorescens (strain ATCC BAA-477 / NRRL B-23932 / Pf-5)).